A 360-amino-acid polypeptide reads, in one-letter code: Phenylalanine--tRNA ligase alpha subunit (360 aa).

Mg(2+) is bound at residue E260.

The protein belongs to the class-II aminoacyl-tRNA synthetase family. Phe-tRNA synthetase alpha subunit type 1 subfamily. In terms of assembly, tetramer of two alpha and two beta subunits. The cofactor is Mg(2+).

It is found in the cytoplasm. It catalyses the reaction tRNA(Phe) + L-phenylalanine + ATP = L-phenylalanyl-tRNA(Phe) + AMP + diphosphate + H(+). The protein is Phenylalanine--tRNA ligase alpha subunit of Methylobacterium radiotolerans (strain ATCC 27329 / DSM 1819 / JCM 2831 / NBRC 15690 / NCIMB 10815 / 0-1).